The chain runs to 1209 residues: Calcium-activated potassium channel subunit alpha-1 (1209 aa).

A compositionally biased stretch (gly residues) spans 1-26 (MANGGGGGGGGSSGSSGGGGGGGGGE). Disordered stretches follow at residues 1 to 29 (MANG…ETAL) and 42 to 64 (LDAS…SVHE). The Extracellular segment spans residues 1-87 (MANGGGGGGG…VPCDSRGQRM (87 aa)). A compositionally biased stretch (low complexity) spans 45–61 (SSSSSSSSSSSSSSSSS). A helical membrane pass occupies residues 88 to 108 (WWAFLASSMVTFFGGLFIILL). Residues 109 to 179 (WRTLKYLWTV…MISAQTLTGR (71 aa)) lie on the Cytoplasmic side of the membrane. Residues Cys-119, Cys-120, and Cys-122 are each lipidated (S-palmitoyl cysteine). The chain crosses the membrane as a helical span at residues 180 to 200 (VLVVLVFALSIGALVIYFIDS). The Extracellular segment spans residues 201 to 215 (SNPIESCQNFYKDFT). The chain crosses the membrane as a helical span at residues 216–236 (LQIDMAFNVFFLLYFGLRFIA). Residues 237–240 (ANDK) lie on the Cytoplasmic side of the membrane. Residues 241–261 (LWFWLEVNSVVDFFTVPPVFV) traverse the membrane as a helical segment. Over 262–265 (SVYL) the chain is Extracellular. Residues 266–286 (NRSWLGLRFLRALRLIQFSEI) form a helical; Voltage-sensor membrane-spanning segment. The Cytoplasmic portion of the chain corresponds to 287 to 301 (LQFLNILKTSNSIKL). The helical transmembrane segment at 302 to 322 (VNLLSIFISTWLTAAGFIHLV) threads the bilayer. Over 323–336 (ENSGDPWENFQNNQ) the chain is Extracellular. The segment at residues 337-359 (ALTYWECVYLLMVTMSTVGYGDV) is an intramembrane region (pore-forming). The Selectivity for potassium motif lies at 353 to 356 (TVGY). The Extracellular segment spans residues 360 to 368 (YAKTTLGRL). The helical transmembrane segment at 369–389 (FMVFFILGGLAMFASYVPEII) threads the bilayer. The Cytoplasmic segment spans residues 390–1209 (ELIGNRKKYG…DKQKKEMVYR (820 aa)). The 143-residue stretch at 408–550 (RKHIVVCGHI…WNWKEGDDAI (143 aa)) folds into the RCK N-terminal 1 domain. Glu-440, Gln-463, and Glu-465 together coordinate Mg(2+). The tract at residues 557 to 577 (LGFIAQSCLAQGLSTMLANLF) is segment S7. The segment S8 stretch occupies residues 614-634 (LSFPTVCELCFVKLKLLMIAI). Residues 682-686 (CKACH) form a heme-binding motif region. The interval 704-734 (EDEQPPTLSPKKKQRNGGMRNSPNTSPKLMR) is disordered. Residue Thr-710 is modified to Phosphothreonine. 3 positions are modified to phosphoserine: Ser-712, Ser-725, and Ser-729. The tract at residues 784-804 (VLSGHVVVCIFGDVSSALIGL) is segment S9. One can recognise an RCK N-terminal 2 domain in the interval 786 to 930 (SGHVVVCIFG…MDRSSPDNSP (145 aa)). Thr-917 is subject to Phosphothreonine. A phosphoserine mark is found at Ser-925 and Ser-929. The Calcium bowl motif lies at 977-999 (TELVNDTNVQFLDQDDDDDPDTE). Positions 986, 989, 992, and 994 each coordinate Ca(2+). The segment S10 stretch occupies residues 1006-1026 (FACGTAFAVSVLDSLMSATYF). Residues 1160-1185 (RASLSHSSHSSQSSSKKSSSVHSIPS) show a composition bias toward low complexity. A disordered region spans residues 1160–1209 (RASLSHSSHSSQSSSKKSSSVHSIPSTANRPNRPKSRESRDKQKKEMVYR). The segment covering 1194–1209 (KSRESRDKQKKEMVYR) has biased composition (basic and acidic residues). 2 positions are modified to phosphoserine: Ser-1195 and Ser-1198.

The protein belongs to the potassium channel family. Calcium-activated (TC 1.A.1.3) subfamily. KCa1.1/KCNMA1 sub-subfamily. In terms of assembly, homotetramer; which constitutes the calcium-activated potassium channel. Interacts with beta subunits KCNMB1, KCNMB2, KCNMB3 and KCNMB4. Interacts with gamma subunits LRRC26, LRRC38, LRRC52 and LRRC55. Beta and gamma subunits are accessory, and modulate its activity. Interacts with RAB11B. Post-translationally, phosphorylated. Phosphorylation by kinases such as PKA and/or PKG. In smooth muscles, phosphorylation affects its activity. In terms of processing, palmitoylation by ZDHHC22 and ZDHHC23 within the intracellular linker between the S0 and S1 transmembrane domains regulates localization to the plasma membrane. Depalmitoylated by LYPLA1 and LYPLAL1, leading to retard exit from the trans-Golgi network.

Its subcellular location is the cell membrane. The protein resides in the endoplasmic reticulum membrane. The catalysed reaction is K(+)(in) = K(+)(out). Ethanol and carbon monoxide-bound heme increase channel activation. Its activity is regulated as follows. Heme inhibits channel activation. Potassium channel activated by both membrane depolarization or increase in cytosolic Ca(2+) that mediates export of K(+). It is also activated by the concentration of cytosolic Mg(2+). Its activation dampens the excitatory events that elevate the cytosolic Ca(2+) concentration and/or depolarize the cell membrane. It therefore contributes to repolarization of the membrane potential. Plays a key role in controlling excitability in a number of systems, such as regulation of the contraction of smooth muscle, the tuning of hair cells in the cochlea, regulation of transmitter release, and innate immunity. In smooth muscles, its activation by high level of Ca(2+), caused by ryanodine receptors in the sarcoplasmic reticulum, regulates the membrane potential. In cochlea cells, its number and kinetic properties partly determine the characteristic frequency of each hair cell and thereby helps to establish a tonotopic map. Kinetics of KCNMA1 channels are determined by alternative splicing, phosphorylation status and its combination with modulating beta subunits. Highly sensitive to both iberiotoxin (IbTx) and charybdotoxin (CTX). Functionally, potassium channel activated by both membrane depolarization or increase in cytosolic Ca(2+) that mediates export of K(+). This is Calcium-activated potassium channel subunit alpha-1 (Kcnma1) from Rattus norvegicus (Rat).